Here is a 283-residue protein sequence, read N- to C-terminus: Myeloid differentiation primary response protein MyD88-A (283 aa).

Residues 27-105 (RLCLYLNPDA…DILTDLGPLI (79 aa)) enclose the Death domain. The tract at residues 106-143 (EADCMKYLEKKHVPLPIQDDKVDSSEQYRITKSDDPYG) is intermediate domain. The 135-residue stretch at 147–281 (ETFDAFICYC…WFWDKLAKAL (135 aa)) folds into the TIR domain.

It is found in the cytoplasm. Its function is as follows. Adapter protein involved in the Toll-like receptor and IL-1 receptor signaling pathway in the innate immune response. Activates expression of target genes in the Spemann organizer region during early embryonic development. Is required for normal axis formation. The polypeptide is Myeloid differentiation primary response protein MyD88-A (myd88-a) (Xenopus laevis (African clawed frog)).